A 2542-amino-acid chain; its full sequence is Ankyrin repeat and KH domain-containing protein 1 (2542 aa).

At M1 the chain carries N-acetylmethionine. The span at 1-10 (MLTDSGGGGT) shows a compositional bias: gly residues. 2 disordered regions span residues 1 to 44 (MLTD…IRTV) and 50 to 69 (AGPASGVGSSGGGGSGSGTG). Positions 20–29 (APRSAPAGAS) are enriched in low complexity. Positions 57-69 (GSSGGGGSGSGTG) are enriched in gly residues. Phosphoserine occurs at positions 101 and 105. ANK repeat units follow at residues 204–233 (VDTRSLAEACSDGDVNAVRKLLDEGRSVNE), 237–266 (EGESLLCLACSAGYYELAQVLLAMHANVED), 271–300 (GDITPLMAASSGGYLDIVKLLLLHDADVNS), 304–333 (TGNTALTYACAGGFVDIVKVLLNEGANIED), 337–366 (NGHTPLMEAASAGHVEVARVLLDHGAGINT), 371–400 (FKESALTLACYKGHLDMVRFLLEAGADQEH), 404–433 (EMHTALMEACMDGHVEVARLLLDSGAQVNM), 437–466 (SFESPLTLAACGGHVELAALLIERGANLEE), 470–499 (EGYTPLMEAAREGHEEMVALLLAQGANINA), 504–533 (TQETALTLACCGGFSEVADFLIKAGADIEL), 534–563 (GCSTPLMEASQEGHLELVKYLLASGANVHA), 567–596 (TGDTALTYACENGHTDVADVLLQAGADLEH), 600–629 (GGRTPLMKAARAGHLCTVQFLISKGANVNR), 634–663 (NDHTVVSLACAGGHLAVVELLLAHGADPTH), and 667–696 (DGSTMLIEAAKGGHTNVVSYLLDYPNNVLS). The stretch at 775–852 (LECIVEETEG…RQLQMKTQQQ (78 aa)) forms a coiled coil. A Phosphoserine modification is found at S803. ANK repeat units lie at residues 1054-1083 (NHDTALTLACAGGHEELVSVLIARDAKIEH), 1087-1116 (KGFTPLILAATAGHVGVVEILLDKGGDIEA), 1121-1150 (TKDTPLSLACSGGRQEVVDLLLARGANKEH), 1154-1183 (SDYTPLSLAASGGYVNIIKILLNAGAEINS), 1189-1218 (LGISPLMLAAMNGHVPAVKLLLDMGSDINA), 1223-1252 (NRNTALTLACFQGRAEVVSLLLDRKANVEH), 1256-1285 (TGLTPLMEAASGGYAEVGRVLLDKGADVNA), 1291-1320 (SRDTALTIAADKGHYKFCELLIHRGAHIDV), 1324-1353 (KGNTPLWLASNGGHFDVVQLLVQAGADVDA), and 1357-1386 (RKITPLMSAFRKGHVKVVQYLVKEVNQFPS). The stretch at 1415–1485 (KAKDQQAAEA…ENKPKENSEL (71 aa)) forms a coiled coil. Disordered stretches follow at residues 1441-1517 (REES…TIGI), 1534-1614 (NVVT…SQEL), and 1632-1664 (SQEEKTSTATSKTQTRLEGEVTPNSLSTSYKTV). Residues 1453–1463 (REKRKEKRKKK) show a composition bias toward basic residues. Residues 1464–1483 (KEEQKRKQEEDEENKPKENS) show a composition bias toward basic and acidic residues. Residues 1484–1502 (ELPEDEDEEENDEDVEQEV) are compositionally biased toward acidic residues. Positions 1503–1517 (PIEPPSATTTTTIGI) are enriched in low complexity. S1540 is modified (phosphoserine). T1553 bears the Phosphothreonine mark. Residues 1590–1603 (NSDSDNLDSTDCNS) are compositionally biased toward low complexity. Polar residues predominate over residues 1604–1614 (ESSSGGKSQEL). At S1632 the chain carries Phosphoserine. The span at 1638–1664 (STATSKTQTRLEGEVTPNSLSTSYKTV) shows a compositional bias: polar residues. The residue at position 1653 (T1653) is a Phosphothreonine. The 65-residue stretch at 1695–1759 (RRSKKLSVPA…ESTRYAVQLI (65 aa)) folds into the KH domain. 3 disordered regions span residues 1886–1923 (NTWGPFPVRPVNPGNTNSSPKHNNTSRLPNQNGTVLPS), 1987–2106 (PSVS…APLT), and 2260–2367 (NMHP…IPPP). A compositionally biased stretch (polar residues) spans 1898–1922 (PGNTNSSPKHNNTSRLPNQNGTVLP). Over residues 1987 to 1996 (PSVSSAPITS) the composition is skewed to low complexity. The span at 1997 to 2019 (GQAPTTFLPASTSQAQLSSQKME) shows a compositional bias: polar residues. Residues 2042 to 2077 (CTPSSTANSCSSSASNTPGAPETHPSSSPTPTSSNT) are compositionally biased toward low complexity. Residues 2078–2106 (QEEAQPSSVSDLSPMSMPFASNSEPAPLT) are compositionally biased toward polar residues. Low complexity-rich tracts occupy residues 2285–2308 (LPSIDPSGSSPSSSSAPLASFSGI) and 2337–2349 (TSASNSSTSAPPT).

It belongs to the mask family. In terms of assembly, interacts with PTPN11. Isoform 2 interacts with HIV-1 VPR. Interacts with NOD2. As to expression, ubiquitous with high expression in cervix, spleen and brain. Expressed in hematopoietic cells with increased expression in leukemia cells. Isoform 2 is highly expressed in spleen with almost no expression in muscle and brain.

It is found in the cytoplasm. Its function is as follows. May play a role as a scaffolding protein that may be associated with the abnormal phenotype of leukemia cells. Isoform 2 may possess an antiapoptotic effect and protect cells during normal cell survival through its regulation of caspases. The protein is Ankyrin repeat and KH domain-containing protein 1 (ANKHD1) of Homo sapiens (Human).